Here is a 261-residue protein sequence, read N- to C-terminus: Anamorsin homolog (261 aa).

The tract at residues 4 to 134 (VQENNQVLYI…EIGSAAKLSL (131 aa)) is N-terminal SAM-like domain. The interval 134 to 173 (LGGGANKAKVAAVWKLDVDDDGEAEERIDEDELLDEEDKV) is linker. [2Fe-2S] cluster-binding residues include C183, C192, C195, and C197. The fe-S binding site A stretch occupies residues 183–197 (CGTTGKRKACKDCSC). [4Fe-4S] cluster is bound by residues C222, C225, C233, and C236. 2 short sequence motifs (cx2C motif) span residues 222–225 (CGSC) and 233–236 (CATC). Residues 222–236 (CGSCYLGDAFRCATC) form a fe-S binding site B region.

This sequence belongs to the anamorsin family. In terms of assembly, monomer. Requires [2Fe-2S] cluster as cofactor. [4Fe-4S] cluster is required as a cofactor.

Its subcellular location is the cytoplasm. The protein resides in the mitochondrion intermembrane space. In terms of biological role, component of the cytosolic iron-sulfur (Fe-S) protein assembly (CIA) machinery. Required for the maturation of extramitochondrial Fe-S proteins. Part of an electron transfer chain functioning in an early step of cytosolic Fe-S biogenesis, facilitating the de novo assembly of a [4Fe-4S] cluster on the cytosolic Fe-S scaffold complex. Electrons are transferred from NADPH via a FAD- and FMN-containing diflavin oxidoreductase. Together with the diflavin oxidoreductase, also required for the assembly of the diferric tyrosyl radical cofactor of ribonucleotide reductase (RNR), probably by providing electrons for reduction during radical cofactor maturation in the catalytic small subunit. The sequence is that of Anamorsin homolog from Culex quinquefasciatus (Southern house mosquito).